The following is a 248-amino-acid chain: NLP effector protein Pc121494 (248 aa).

A signal peptide spans 1 to 19 (MKFIAVLIAAIASLSAVQA). The Hepta-peptide GHRHDWE motif signature appears at 124–130 (GHRNGWE). An N-linked (GlcNAc...) asparagine glycan is attached at Asn-143.

This sequence belongs to the Necrosis inducing protein (NPP1) family.

It is found in the secreted. Its function is as follows. Secreted effector that contributes strongly to virulence during infection by P.capsici. The chain is NLP effector protein Pc121494 from Phytophthora capsici.